We begin with the raw amino-acid sequence, 360 residues long: Photosystem II protein D1 1 (360 aa).

The next 3 membrane-spanning stretches (helical) occupy residues 29-46 (YIGW…TATT), 118-133 (HFLI…QWEL), and 142-156 (WICV…AATA). His-118 is a chlorophyll a binding site. A pheophytin a-binding site is contributed by Tyr-126. Residues Asp-170 and Glu-189 each contribute to the [CaMn4O5] cluster site. The helical transmembrane segment at 197–218 (FHMLGVAGVFGGALFAAMHGSL) threads the bilayer. His-198 lines the chlorophyll a pocket. A quinone contacts are provided by residues His-215 and 264 to 265 (SF). Fe cation is bound at residue His-215. A Fe cation-binding site is contributed by His-272. The chain crosses the membrane as a helical span at residues 274–288 (FLGAWPVVGIWFAAL). [CaMn4O5] cluster is bound by residues His-332, Glu-333, Asp-342, and Ala-344. Residues 345 to 360 (SGDAQMVALNAPAIEG) constitute a propeptide that is removed on maturation.

This sequence belongs to the reaction center PufL/M/PsbA/D family. In terms of assembly, PSII is composed of 1 copy each of membrane proteins PsbA, PsbB, PsbC, PsbD, PsbE, PsbF, PsbH, PsbI, PsbJ, PsbK, PsbL, PsbM, PsbT, PsbX, PsbY, PsbZ, Psb30/Ycf12, peripheral proteins PsbO, CyanoQ (PsbQ), PsbU, PsbV and a large number of cofactors. It forms dimeric complexes. The D1/D2 heterodimer binds P680, chlorophylls that are the primary electron donor of PSII, and subsequent electron acceptors. It shares a non-heme iron and each subunit binds pheophytin, quinone, additional chlorophylls, carotenoids and lipids. D1 provides most of the ligands for the Mn4-Ca-O5 cluster of the oxygen-evolving complex (OEC). There is also a Cl(-1) ion associated with D1 and D2, which is required for oxygen evolution. The PSII complex binds additional chlorophylls, carotenoids and specific lipids. serves as cofactor. In terms of processing, C-terminally processed by CtpA; processing is essential to allow assembly of the oxygen-evolving complex and photosynthetic growth. Post-translationally, tyr-161 forms a radical intermediate that is referred to as redox-active TyrZ, YZ or Y-Z. C-terminally processed by CtpA; processing is essential to allow assembly of the oxygen-evolving complex and thus photosynthetic growth.

The protein resides in the cellular thylakoid membrane. The catalysed reaction is 2 a plastoquinone + 4 hnu + 2 H2O = 2 a plastoquinol + O2. Photosystem II (PSII) is a light-driven water:plastoquinone oxidoreductase that uses light energy to abstract electrons from H(2)O, generating O(2) and a proton gradient subsequently used for ATP formation. It consists of a core antenna complex that captures photons, and an electron transfer chain that converts photonic excitation into a charge separation. The D1/D2 (PsbA/PsbD) reaction center heterodimer binds P680, the primary electron donor of PSII as well as several subsequent electron acceptors. In Synechocystis sp. (strain ATCC 27184 / PCC 6803 / Kazusa), this protein is Photosystem II protein D1 1.